Reading from the N-terminus, the 92-residue chain is Enhancer of yellow 2 transcription factor (92 aa).

Belongs to the ENY2 family. As to quaternary structure, component of the nuclear pore complex (NPC)-associated TREX-2 complex (transcription and export complex 2). Component of the SAGA transcription coactivator-HAT complex. Within the SAGA complex, participates in a subcomplex of SAGA called the DUB module (deubiquitination module).

It is found in the nucleus. The protein resides in the nucleoplasm. Functionally, involved in mRNA export coupled transcription activation by association with both the TREX-2 and the SAGA complexes. The transcription regulatory histone acetylation (HAT) complex SAGA is a multiprotein complex that activates transcription by remodeling chromatin and mediating histone acetylation and deubiquitination. Within the SAGA complex, participates in a subcomplex that specifically deubiquitinates histones. The SAGA complex is recruited to specific gene promoters by activators, where it is required for transcription. The TREX-2 complex functions in docking export-competent ribonucleoprotein particles (mRNPs) to the nuclear entrance of the nuclear pore complex (nuclear basket). TREX-2 participates in mRNA export and accurate chromatin positioning in the nucleus by tethering genes to the nuclear periphery. The sequence is that of Enhancer of yellow 2 transcription factor from Aedes aegypti (Yellowfever mosquito).